A 363-amino-acid polypeptide reads, in one-letter code: MKESVIRKLEGLLERNEEVMALLGDASVISDQDRFRALSKEYAQLEDVVAGFKAYQQAQVDLDSAKEMLEEDDAEMREMAQEEMKAAKAKLEHLEDELQILLLPKDPDDDKNAFVEIRAGAGGDEAAIFAGDLFRMYSRYAEANRWQIEIMSCNEGEHGGFKEVIMKVSGDGVYGKLKFESGGHRVQRVPETESQGRVHTSAVTVVVLHEVPEAEAISINPADLKVDTFRSSGAGGQHVNKTDSAIRITHIPTGIVVECQDQRSQHKNRAQAMSVLAARIQAVEDEKRRSAEESTRRSLVASGDRSERVRTYNFPQGRVSEHRINLTLYRLNEVMEGDLDAILLPLMQEHQADQLAALADEQG.

Glutamine 237 carries the N5-methylglutamine modification. Basic and acidic residues predominate over residues 284–296 (EDEKRRSAEESTR). The disordered stretch occupies residues 284-305 (EDEKRRSAEESTRRSLVASGDR).

Belongs to the prokaryotic/mitochondrial release factor family. Methylated by PrmC. Methylation increases the termination efficiency of RF1.

The protein localises to the cytoplasm. In terms of biological role, peptide chain release factor 1 directs the termination of translation in response to the peptide chain termination codons UAG and UAA. The protein is Peptide chain release factor 1 of Shewanella baltica (strain OS195).